Reading from the N-terminus, the 366-residue chain is S-adenosylmethionine:tRNA ribosyltransferase-isomerase (366 aa).

This sequence belongs to the QueA family. In terms of assembly, monomer.

Its subcellular location is the cytoplasm. The enzyme catalyses 7-aminomethyl-7-carbaguanosine(34) in tRNA + S-adenosyl-L-methionine = epoxyqueuosine(34) in tRNA + adenine + L-methionine + 2 H(+). It functions in the pathway tRNA modification; tRNA-queuosine biosynthesis. Its function is as follows. Transfers and isomerizes the ribose moiety from AdoMet to the 7-aminomethyl group of 7-deazaguanine (preQ1-tRNA) to give epoxyqueuosine (oQ-tRNA). This is S-adenosylmethionine:tRNA ribosyltransferase-isomerase from Agrobacterium fabrum (strain C58 / ATCC 33970) (Agrobacterium tumefaciens (strain C58)).